The sequence spans 382 residues: Anhydro-N-acetylmuramic acid kinase (382 aa).

Residue 9-16 (GTSLDGID) coordinates ATP.

This sequence belongs to the anhydro-N-acetylmuramic acid kinase family.

The enzyme catalyses 1,6-anhydro-N-acetyl-beta-muramate + ATP + H2O = N-acetyl-D-muramate 6-phosphate + ADP + H(+). Its pathway is amino-sugar metabolism; 1,6-anhydro-N-acetylmuramate degradation. It participates in cell wall biogenesis; peptidoglycan recycling. Its function is as follows. Catalyzes the specific phosphorylation of 1,6-anhydro-N-acetylmuramic acid (anhMurNAc) with the simultaneous cleavage of the 1,6-anhydro ring, generating MurNAc-6-P. Is required for the utilization of anhMurNAc either imported from the medium or derived from its own cell wall murein, and thus plays a role in cell wall recycling. The protein is Anhydro-N-acetylmuramic acid kinase of Bacillus cereus (strain G9842).